We begin with the raw amino-acid sequence, 130 residues long: Leptin receptor gene-related protein (130 aa).

A run of 4 helical transmembrane segments spans residues 7–27 (LVAL…GCAL), 32–52 (QYWP…NLIA), 68–88 (LAYF…VVLA), and 99–119 (GLVM…FLIF).

This sequence belongs to the OB-RGRP/VPS55 family.

The protein localises to the golgi apparatus membrane. The protein resides in the endosome membrane. Functionally, involved in protein trafficking. May be involved in the down-regulation of membrane protein levels. This chain is Leptin receptor gene-related protein (leprot), found in Danio rerio (Zebrafish).